The sequence spans 240 residues: Poxin (240 aa).

Residue His46 is the Proton donor of the active site. Tyr181 (shared with catalytic histidine of dimeric partner) is an active-site residue. Lys185 (proton acceptor; shared with catalytic histidine of dimeric partner) is an active-site residue.

This sequence belongs to the poxin family. In terms of assembly, homodimer.

It carries out the reaction 2',3'-cGAMP + H2O = Gp(2'-5')Ap(3') + H(+). In terms of biological role, nuclease that cleaves host 2',3'-cGAMP. This chain is Poxin (P26), found in Lepidoptera (butterflies and moths).